A 142-amino-acid chain; its full sequence is Hemoglobin subunit alpha (142 aa).

Residues 1-142 (VLSAADKNNV…VSTVLTSKYR (142 aa)) enclose the Globin domain. Ser3 is subject to Phosphoserine. N6-succinyllysine is present on residues Lys7 and Lys11. Lys16 bears the N6-acetyllysine; alternate mark. Lys16 carries the N6-succinyllysine; alternate modification. Position 24 is a phosphotyrosine (Tyr24). Ser35 carries the post-translational modification Phosphoserine. N6-succinyllysine is present on Lys40. His58 contacts O2. His87 contributes to the heme b binding site. Phosphoserine is present on Ser102. Thr108 is modified (phosphothreonine). Residue Ser125 is modified to Phosphoserine. Phosphothreonine occurs at positions 135 and 138. The residue at position 139 (Ser139) is a Phosphoserine.

It belongs to the globin family. In terms of assembly, heterotetramer of two alpha chains and two beta chains. In terms of tissue distribution, red blood cells.

Involved in oxygen transport from the lung to the various peripheral tissues. Functionally, hemopressin acts as an antagonist peptide of the cannabinoid receptor CNR1. Hemopressin-binding efficiently blocks cannabinoid receptor CNR1 and subsequent signaling. The sequence is that of Hemoglobin subunit alpha (HBA) from Procavia capensis habessinica (Abyssinian hyrax).